The sequence spans 542 residues: Chaperonin GroEL 2 (542 aa).

ATP-binding positions include 30–33 (TLGP), lysine 51, 87–91 (DGTTT), glycine 415, and aspartate 495.

It belongs to the chaperonin (HSP60) family. In terms of assembly, forms a cylinder of 14 subunits composed of two heptameric rings stacked back-to-back. Interacts with the co-chaperonin GroES.

The protein resides in the cytoplasm. The enzyme catalyses ATP + H2O + a folded polypeptide = ADP + phosphate + an unfolded polypeptide.. Together with its co-chaperonin GroES, plays an essential role in assisting protein folding. The GroEL-GroES system forms a nano-cage that allows encapsulation of the non-native substrate proteins and provides a physical environment optimized to promote and accelerate protein folding. In Methylococcus capsulatus (strain ATCC 33009 / NCIMB 11132 / Bath), this protein is Chaperonin GroEL 2.